We begin with the raw amino-acid sequence, 710 residues long: Polyribonucleotide nucleotidyltransferase (710 aa).

Mg(2+) is bound by residues Asp491 and Asp497. The 60-residue stretch at 559-618 folds into the KH domain; it reads PRLITIKINPEKIRDVIGKGGAVIRALTEETGTQIDISDEGVVTIASVDAAAGQEAKRRI. Positions 628 to 696 constitute an S1 motif domain; sequence GKVYEGTVLK…DRGRLKLSMK (69 aa).

It belongs to the polyribonucleotide nucleotidyltransferase family. Mg(2+) is required as a cofactor.

It localises to the cytoplasm. It carries out the reaction RNA(n+1) + phosphate = RNA(n) + a ribonucleoside 5'-diphosphate. In terms of biological role, involved in mRNA degradation. Catalyzes the phosphorolysis of single-stranded polyribonucleotides processively in the 3'- to 5'-direction. This chain is Polyribonucleotide nucleotidyltransferase, found in Herminiimonas arsenicoxydans.